The sequence spans 130 residues: Small ribosomal subunit protein uS8 (130 aa).

It belongs to the universal ribosomal protein uS8 family. Part of the 30S ribosomal subunit. Contacts proteins S5 and S12.

Functionally, one of the primary rRNA binding proteins, it binds directly to 16S rRNA central domain where it helps coordinate assembly of the platform of the 30S subunit. The sequence is that of Small ribosomal subunit protein uS8 from Cronobacter sakazakii (strain ATCC BAA-894) (Enterobacter sakazakii).